A 424-amino-acid polypeptide reads, in one-letter code: Virion nicking-joining enzyme (424 aa).

2 consecutive PLD phosphodiesterase domains span residues 110–137 and 320–346; these read LGGVLHTKFWISDNTHIYLGSANMDWRS and YSRVNHAKYMVTDKTAYIGTSNWTGNY.

The protein belongs to the orthopoxvirus OPG042 family.

The protein localises to the virion. Its function is as follows. DNA nicking enzyme that cleaves extruded cruciform DNA at its tip. Probably nicks viral hairpins. In Homo sapiens (Human), this protein is Virion nicking-joining enzyme (OPG042).